Reading from the N-terminus, the 518-residue chain is Kelch repeat and BTB domain-containing protein 4 (518 aa).

The BTB domain maps to 45-112 (ADVTISVEGR…IYHGTVKLRA (68 aa)). A BACK domain is found at 147 to 239 (CLQVMWLADR…SLKEIGENVH (93 aa)). Kelch repeat units follow at residues 239–285 (HIYL…KHGG), 286–328 (DLYV…SVPG), 331–378 (AIYS…NLNG), 380–430 (IYLL…VHKD), and 432–481 (VFIV…VFRD).

In terms of assembly, component of the BCR(KBTBD4) E3 ubiquitin ligase complex, at least composed of CUL3, KBTBD4 and RBX1.

In terms of biological role, substrate-specific adapter of a BCR (BTB-CUL3-RBX1) E3 ubiquitin ligase complex which targets CoREST corepressor complex components RCOR1, KDM1A/LSD1 and HDAC2 for proteasomal degradation. RCOR1 is likely to be the primary target while degradation of KDM1A and HDAC2 is likely due to their association with RCOR1. Also targets RCOR3, MIER2 and MIER3 for proteasomal degradation as well as associated proteins ZNF217 and RREB1. Degradation is dependent on the presence of an ELM2 domain in the target proteins. The polypeptide is Kelch repeat and BTB domain-containing protein 4 (KBTBD4) (Pongo abelii (Sumatran orangutan)).